The chain runs to 362 residues: GDSL esterase/lipase At5g18430 (362 aa).

An N-terminal signal peptide occupies residues 1–19 (MTISTVIAFMSMFLVFVMS). Serine 35 serves as the catalytic Nucleophile. N-linked (GlcNAc...) asparagine glycosylation occurs at asparagine 117. Catalysis depends on residues aspartate 327 and histidine 330. N-linked (GlcNAc...) asparagine glycosylation occurs at asparagine 355.

It belongs to the 'GDSL' lipolytic enzyme family.

It is found in the secreted. The protein is GDSL esterase/lipase At5g18430 of Arabidopsis thaliana (Mouse-ear cress).